A 763-amino-acid polypeptide reads, in one-letter code: Long-chain-fatty-acid--CoA ligase ACSBG2 (763 aa).

Residues 47–78 are disordered; the sequence is CSMKPADDPKTERSQMNKTGLASSSRPASNVW. Positions 51-61 are enriched in basic and acidic residues; it reads PADDPKTERSQ. Polar residues predominate over residues 62-78; sequence MNKTGLASSSRPASNVW. Residues 281 to 289, 472 to 477, Asp-550, Arg-565, and Lys-678 each bind ATP; these read TSGTTGQPK and ELYGMS.

It belongs to the ATP-dependent AMP-binding enzyme family. Bubblegum subfamily.

It localises to the cytoplasm. The enzyme catalyses a long-chain fatty acid + ATP + CoA = a long-chain fatty acyl-CoA + AMP + diphosphate. It catalyses the reaction (5Z,8Z,11Z,14Z)-eicosatetraenoate + ATP + CoA = (5Z,8Z,11Z,14Z)-eicosatetraenoyl-CoA + AMP + diphosphate. It carries out the reaction hexadecanoate + ATP + CoA = hexadecanoyl-CoA + AMP + diphosphate. The catalysed reaction is (9Z)-octadecenoate + ATP + CoA = (9Z)-octadecenoyl-CoA + AMP + diphosphate. The enzyme catalyses (9Z,12Z)-octadecadienoate + ATP + CoA = (9Z,12Z)-octadecadienoyl-CoA + AMP + diphosphate. It catalyses the reaction tetracosanoate + ATP + CoA = tetracosanoyl-CoA + AMP + diphosphate. Functionally, mediates activation of long-chain fatty acids for both synthesis of cellular lipids, and degradation via beta-oxidation. In terms of biological role, catalyzes the conversion of fatty acids such as long chain and very long-chain fatty acids to their active form acyl-CoAs for both synthesis of cellular lipids, and degradation via beta-oxidation. Can activate diverse saturated, monosaturated and polyunsaturated fatty acids. The protein is Long-chain-fatty-acid--CoA ligase ACSBG2 of Gallus gallus (Chicken).